The primary structure comprises 491 residues: Keratin, type I cytoskeletal 39 (491 aa).

The head stretch occupies residues 1–96; the sequence is MDTKGCTTTN…WYGEGINSNE (96 aa). The IF rod domain occupies 96–407; that stretch reads EKETMQILNE…SLLESSDGKR (312 aa). Positions 97 to 131 are coil 1A; it reads KETMQILNERLANYLQKVRMLERENAELESKIQEE. Positions 132 to 142 are linker 1; the sequence is SNKELPVLCPD. Positions 143 to 243 are coil 1B; it reads YLSYYTTIEE…HKEEINSLQC (101 aa). A linker 12 region spans residues 244–259; it reads QLGERLDIEVTAAPSA. Residues 260–403 form a coil 2 region; the sequence is DLNQVLQEMR…TTYRSLLESS (144 aa). Positions 404-491 are tail; it reads DGKRPCYPRA…PCFIIRPAKV (88 aa).

It belongs to the intermediate filament family. Heterotetramer of two type I and two type II keratins. Expressed in skin and scalp. In the hair follicle, it is present in the upper hair cuticle and the upper cortex. Also present in the in the upper portion of beard hairs (at protein level).

Functionally, may play a role in late hair differentiation. In Homo sapiens (Human), this protein is Keratin, type I cytoskeletal 39 (KRT39).